Consider the following 139-residue polypeptide: Small ribosomal subunit protein bS6 (139 aa).

Residues 97–139 (TEASPMAKAKDERDSRRSSEGERRSAPAEATEEVKETAEKAAE) are disordered. Over residues 104-139 (KAKDERDSRRSSEGERRSAPAEATEEVKETAEKAAE) the composition is skewed to basic and acidic residues.

It belongs to the bacterial ribosomal protein bS6 family.

In terms of biological role, binds together with bS18 to 16S ribosomal RNA. The sequence is that of Small ribosomal subunit protein bS6 from Shewanella sediminis (strain HAW-EB3).